A 273-amino-acid polypeptide reads, in one-letter code: Formamidopyrimidine-DNA glycosylase (273 aa).

Proline 2 functions as the Schiff-base intermediate with DNA in the catalytic mechanism. Glutamate 3 serves as the catalytic Proton donor. The active-site Proton donor; for beta-elimination activity is the lysine 59. The DNA site is built by histidine 93, arginine 111, and arginine 154. An FPG-type zinc finger spans residues 239-273; that stretch reads KVYGRGGEPCKECGHTLVRIRLAGRSTVFCPCCQV. The active-site Proton donor; for delta-elimination activity is the arginine 263.

This sequence belongs to the FPG family. As to quaternary structure, monomer. The cofactor is Zn(2+).

The enzyme catalyses Hydrolysis of DNA containing ring-opened 7-methylguanine residues, releasing 2,6-diamino-4-hydroxy-5-(N-methyl)formamidopyrimidine.. It carries out the reaction 2'-deoxyribonucleotide-(2'-deoxyribose 5'-phosphate)-2'-deoxyribonucleotide-DNA = a 3'-end 2'-deoxyribonucleotide-(2,3-dehydro-2,3-deoxyribose 5'-phosphate)-DNA + a 5'-end 5'-phospho-2'-deoxyribonucleoside-DNA + H(+). Its function is as follows. Involved in base excision repair of DNA damaged by oxidation or by mutagenic agents. Acts as a DNA glycosylase that recognizes and removes damaged bases. Has a preference for oxidized purines, such as 7,8-dihydro-8-oxoguanine (8-oxoG). Has AP (apurinic/apyrimidinic) lyase activity and introduces nicks in the DNA strand. Cleaves the DNA backbone by beta-delta elimination to generate a single-strand break at the site of the removed base with both 3'- and 5'-phosphates. The chain is Formamidopyrimidine-DNA glycosylase from Desulfitobacterium hafniense (strain DSM 10664 / DCB-2).